Reading from the N-terminus, the 611-residue chain is Methionine--tRNA ligase (611 aa).

A 'HIGH' region motif is present at residues 12-22; that stretch reads PYANGPRHIGH. Zn(2+) is bound by residues C144, C147, C157, and C160. Residues 348 to 352 carry the 'KMSKS' region motif; that stretch reads KFSSS. S351 contributes to the ATP binding site.

The protein belongs to the class-I aminoacyl-tRNA synthetase family. MetG type 1 subfamily. As to quaternary structure, monomer. Zn(2+) serves as cofactor.

The protein localises to the cytoplasm. It catalyses the reaction tRNA(Met) + L-methionine + ATP = L-methionyl-tRNA(Met) + AMP + diphosphate. Functionally, is required not only for elongation of protein synthesis but also for the initiation of all mRNA translation through initiator tRNA(fMet) aminoacylation. In Corynebacterium urealyticum (strain ATCC 43042 / DSM 7109), this protein is Methionine--tRNA ligase.